Here is a 503-residue protein sequence, read N- to C-terminus: Protein-cysteine N-palmitoyltransferase HHAT-like protein (503 aa).

8 helical membrane-spanning segments follow: residues 12-31 (LGLY…RGLL), 65-87 (WVMW…VLFA), 100-122 (WMYA…LLLL), 127-149 (MVLY…LASL), 250-272 (AGLS…ILTI), 287-309 (LAGL…FGVV), 426-445 (VRAL…NLVS), and 460-482 (ILTG…VQLV).

It belongs to the membrane-bound acyltransferase family. HHAT subfamily. In terms of assembly, interacts with SHH.

Its subcellular location is the endoplasmic reticulum membrane. Functionally, negatively regulates N-terminal palmitoylation of SHH by HHAT/SKN. This chain is Protein-cysteine N-palmitoyltransferase HHAT-like protein (Hhatl), found in Mus musculus (Mouse).